The primary structure comprises 128 residues: UPF0212 protein TGAM_1344 (128 aa).

It belongs to the UPF0212 family.

This is UPF0212 protein TGAM_1344 from Thermococcus gammatolerans (strain DSM 15229 / JCM 11827 / EJ3).